We begin with the raw amino-acid sequence, 91 residues long: Small ribosomal subunit protein bS18 (91 aa).

It belongs to the bacterial ribosomal protein bS18 family. In terms of assembly, part of the 30S ribosomal subunit. Forms a tight heterodimer with protein bS6.

In terms of biological role, binds as a heterodimer with protein bS6 to the central domain of the 16S rRNA, where it helps stabilize the platform of the 30S subunit. The chain is Small ribosomal subunit protein bS18 from Burkholderia vietnamiensis (strain G4 / LMG 22486) (Burkholderia cepacia (strain R1808)).